A 187-amino-acid chain; its full sequence is MSRIGKRPITVPKGVQVTIGEQNLVTVKGPKGTLTQKLHPDMIIKQEGDVITVQRPSDEKLHRSLHGLTRTLINNMIVGVTQGWQRALEINGVGYRAQLEGKTLVLNLGFSHPVRIEPPPNISYIVGERKSANDPLSLTVVGIDKQQVGEEAARIRSLRPPEPYKGKGIKYLEEKIRRKAGKAGKAK.

It belongs to the universal ribosomal protein uL6 family. As to quaternary structure, part of the 50S ribosomal subunit.

Its function is as follows. This protein binds to the 23S rRNA, and is important in its secondary structure. It is located near the subunit interface in the base of the L7/L12 stalk, and near the tRNA binding site of the peptidyltransferase center. This chain is Large ribosomal subunit protein uL6, found in Chloroflexus aggregans (strain MD-66 / DSM 9485).